The primary structure comprises 382 residues: F-box protein At3g19470 (382 aa).

The region spanning 1-44 (MYNLPRDLPEEVLCRIPLTSLRPVRSTCKKWSTLSKCGSFAKKH) is the F-box domain.

The protein is F-box protein At3g19470 of Arabidopsis thaliana (Mouse-ear cress).